The sequence spans 131 residues: Profilin-6 (131 aa).

A disulfide bond links C13 and C115. The short motif at 81–97 (VVIRGKKGAGGITIKKT) is the Involved in PIP2 interaction element. T111 is subject to Phosphothreonine.

The protein belongs to the profilin family. Occurs in many kinds of cells as a complex with monomeric actin in a 1:1 ratio. In terms of processing, phosphorylated by MAP kinases.

The protein resides in the cytoplasm. It localises to the cytoskeleton. Functionally, binds to actin and affects the structure of the cytoskeleton. At high concentrations, profilin prevents the polymerization of actin, whereas it enhances it at low concentrations. This chain is Profilin-6, found in Corylus avellana (European hazel).